Here is a 151-residue protein sequence, read N- to C-terminus: Deoxyuridine 5'-triphosphate nucleotidohydrolase (151 aa).

Residues 70-72 (RSG), Asn-83, 87-89 (LID), and Met-97 contribute to the substrate site.

This sequence belongs to the dUTPase family. It depends on Mg(2+) as a cofactor.

The enzyme catalyses dUTP + H2O = dUMP + diphosphate + H(+). It functions in the pathway pyrimidine metabolism; dUMP biosynthesis; dUMP from dCTP (dUTP route): step 2/2. Its function is as follows. This enzyme is involved in nucleotide metabolism: it produces dUMP, the immediate precursor of thymidine nucleotides and it decreases the intracellular concentration of dUTP so that uracil cannot be incorporated into DNA. The sequence is that of Deoxyuridine 5'-triphosphate nucleotidohydrolase from Haemophilus influenzae (strain 86-028NP).